We begin with the raw amino-acid sequence, 211 residues long: Protein-methionine-sulfoxide reductase heme-binding subunit MsrQ (211 aa).

A run of 5 helical transmembrane segments spans residues 45–65 (HFTGLTALKFLLAALLITPLA), 82–102 (LWCFAWATLHLTSYALLELGV), 116–136 (PYLTLGIISWVILLALAFTST), 153–173 (FVYLVAILAPIHYLWSVKIIS), and 178–198 (IYAGLAVLLLALRYKKLLSLF).

This sequence belongs to the MsrQ family. Heterodimer of a catalytic subunit (MsrP) and a heme-binding subunit (MsrQ). FMN serves as cofactor. Requires heme b as cofactor.

Its subcellular location is the cell inner membrane. Part of the MsrPQ system that repairs oxidized periplasmic proteins containing methionine sulfoxide residues (Met-O), using respiratory chain electrons. Thus protects these proteins from oxidative-stress damage caused by reactive species of oxygen and chlorine generated by the host defense mechanisms. MsrPQ is essential for the maintenance of envelope integrity under bleach stress, rescuing a wide series of structurally unrelated periplasmic proteins from methionine oxidation, including the primary periplasmic chaperone SurA and the lipoprotein Pal. MsrQ provides electrons for reduction to the reductase catalytic subunit MsrP, using the quinone pool of the respiratory chain. In Escherichia coli O127:H6 (strain E2348/69 / EPEC), this protein is Protein-methionine-sulfoxide reductase heme-binding subunit MsrQ.